A 312-amino-acid chain; its full sequence is Homoserine O-acetyltransferase (312 aa).

Cys-142 (acyl-thioester intermediate) is an active-site residue. Substrate-binding residues include Lys-163 and Ser-194. His-237 serves as the catalytic Proton acceptor. Glu-239 is an active-site residue. Arg-251 contacts substrate.

It belongs to the MetA family.

The protein resides in the cytoplasm. It carries out the reaction L-homoserine + acetyl-CoA = O-acetyl-L-homoserine + CoA. It participates in amino-acid biosynthesis; L-methionine biosynthesis via de novo pathway; O-acetyl-L-homoserine from L-homoserine: step 1/1. Transfers an acetyl group from acetyl-CoA to L-homoserine, forming acetyl-L-homoserine. The protein is Homoserine O-acetyltransferase of Catenibacterium mitsuokai (strain DSM 15897 / JCM 10609 / CCUG 48821 A / CIP 106738 / RCA14-39).